A 636-amino-acid polypeptide reads, in one-letter code: Golgin subfamily A member 8F (636 aa).

2 disordered regions span residues 1-72 and 107-127; these read MAEE…SATL and NKQVEHQLEEEKKANNEKQKA. The segment covering 38 to 50 has biased composition (polar residues); the sequence is TNGSIHETATSGG. Coiled coils occupy residues 93-148, 211-263, and 306-412; these read VSQL…LNTD, LEQS…MSQE, and EVEL…QQKQ. Over residues 109 to 127 the composition is skewed to basic and acidic residues; that stretch reads QVEHQLEEEKKANNEKQKA. Disordered regions lie at residues 344–364, 422–449, 496–537, and 588–612; these read LREQEERLQEQQERLPEQEER, ALPGEGDGGGHLDSEGEEAPRPIPSIPQ, PITK…GVAA, and PVQGEAREGSPHDNPTAQPIVQDHQ. Residues 429 to 441 are compositionally biased toward basic and acidic residues; that stretch reads GGGHLDSEGEEAP. Gly residues predominate over residues 509-522; that stretch reads PGGGHHQAGPGQGG.

This sequence belongs to the GOLGA8 family.

This chain is Golgin subfamily A member 8F, found in Homo sapiens (Human).